The sequence spans 363 residues: Chorismate synthase (363 aa).

NADP(+) contacts are provided by Arg48 and Arg54. Residues 131 to 133 (RSS), 244 to 245 (NA), Gly288, 303 to 307 (KPTSS), and Arg329 each bind FMN.

The protein belongs to the chorismate synthase family. As to quaternary structure, homotetramer. The cofactor is FMNH2.

It carries out the reaction 5-O-(1-carboxyvinyl)-3-phosphoshikimate = chorismate + phosphate. It participates in metabolic intermediate biosynthesis; chorismate biosynthesis; chorismate from D-erythrose 4-phosphate and phosphoenolpyruvate: step 7/7. Functionally, catalyzes the anti-1,4-elimination of the C-3 phosphate and the C-6 proR hydrogen from 5-enolpyruvylshikimate-3-phosphate (EPSP) to yield chorismate, which is the branch point compound that serves as the starting substrate for the three terminal pathways of aromatic amino acid biosynthesis. This reaction introduces a second double bond into the aromatic ring system. The polypeptide is Chorismate synthase (Maricaulis maris (strain MCS10) (Caulobacter maris)).